The following is a 270-amino-acid chain: Hematopoietically-expressed homeobox protein HHEX (270 aa).

The segment at 1-137 is interaction with SOX13; it reads MQYPHPGPAA…PFLQRPLHKR (137 aa). At Ser53 the chain carries Phosphoserine. The homeobox DNA-binding region spans 137–196; the sequence is RKGGQVRFSNDQTIELEKKFETQKYLSPPERKRLAKMLQLSERQVKTWFQNRRAKWRRLK. Residues 137–270 form a required for WNT signaling induction region; sequence RKGGQVRFSN…EGDKSYFNAG (134 aa). The disordered stretch occupies residues 194–270; sequence RLKQENPQSN…EGDKSYFNAG (77 aa). The segment covering 222–241 has biased composition (polar residues); it reads PSEQNKGASLDSSQCSPSPA. Positions 244–260 are enriched in acidic residues; that stretch reads EDLESEISEDSDQEVDI.

Interacts with CD81; the interaction prevents nuclear translocation of HHEX. Interacts (via N-terminus) with SOX13; abolishes the SOX13-mediated inhibition of WNT-mediated transcriptional activity via competitive inhibition of the SOX13-TCF7 complex. Interacts with EIF4E; the interaction inhibits EIF4E-mediated mRNA nuclear export. As to expression, liver and promyelocytic leukemia cell line HL-60.

Its subcellular location is the nucleus. It localises to the nuclear body. The protein resides in the cytoplasm. Its function is as follows. Recognizes the DNA sequence 5'-ATTAA-3'. Transcriptional repressor. Activator of WNT-mediated transcription in conjunction with CTNNB1. Establishes anterior identity at two levels; acts early to enhance canonical WNT-signaling by repressing expression of TLE4, and acts later to inhibit NODAL-signaling by directly targeting NODAL. Inhibits EIF4E-mediated mRNA nuclear export. May play a role in hematopoietic differentiation. The sequence is that of Hematopoietically-expressed homeobox protein HHEX (HHEX) from Homo sapiens (Human).